The following is a 359-amino-acid chain: Acyl-CoA desaturase 3 (359 aa).

The segment at 1 to 34 (MPGHLLQEEMTPSYTTTTTITAPPSGSLQNGREK) is disordered. Topologically, residues 1-72 (MPGHLLQEEM…EGPPPKLEYV (72 aa)) are cytoplasmic. Over residues 11 to 27 (TPSYTTTTTITAPPSGS) the composition is skewed to low complexity. The chain crosses the membrane as a helical span at residues 73–93 (WRNIILMALLHVGALYGITLV). Asn75 contacts substrate. Topologically, residues 94–97 (PSCK) are lumenal. The chain crosses the membrane as a helical span at residues 98-118 (LYTCLFAFVYYVISIEGIGAG). The Cytoplasmic segment spans residues 119 to 217 (VHRLWSHRTY…EKLVMFQRRY (99 aa)). Fe cation-binding residues include His120 and His125. The Histidine box-1 motif lies at 120 to 125 (HRLWSH). Positions 148, 155, and 156 each coordinate substrate. 3 residues coordinate Fe cation: His157, His160, and His161. Residues 157 to 161 (HRAHH) carry the Histidine box-2 motif. The substrate site is built by Arg188 and Lys189. Ser203 carries the post-translational modification Phosphoserine. The chain crosses the membrane as a helical span at residues 218-237 (YKPGILLMCFILPTLVPWYC). Residues 238-241 (WGET) lie on the Lumenal side of the membrane. Residues 242–263 (FLNSFYVATLLRYAVVLNATWL) traverse the membrane as a helical segment. Position 262 (Trp262) interacts with substrate. Over 264 to 359 (VNSAAHLYGY…RTGDGSHKSG (96 aa)) the chain is Cytoplasmic. 4 residues coordinate Fe cation: His269, His298, His301, and His302. A Histidine box-3 motif is present at residues 298–302 (HNYHH).

Belongs to the fatty acid desaturase type 1 family. It depends on Fe(2+) as a cofactor. As to expression, detected in skin, but at lower levels compared to Scd1. Detected in the middlle part of the sebaceous gland, but not in hair follicle. Not detected in liver and brain.

It localises to the endoplasmic reticulum membrane. It is found in the microsome membrane. It carries out the reaction hexadecanoyl-CoA + 2 Fe(II)-[cytochrome b5] + O2 + 2 H(+) = (9Z)-hexadecenoyl-CoA + 2 Fe(III)-[cytochrome b5] + 2 H2O. Its function is as follows. Stearoyl-CoA desaturase that utilizes O(2) and electrons from reduced cytochrome b5 to introduce the first double bond into saturated fatty acyl-CoA substrates. Catalyzes the insertion of a cis double bond at the delta-9 position into fatty acyl-CoA substrates including palmitoyl-CoA. Has a strong preference for saturated fatty acids with chain lengths of 14 or 16 carbon atoms (C14:0 and C16:0), and has only very low activity with stearatate (C18:0). Required for the biosynthesis of membrane phospholipids, cholesterol esters and triglycerides. The chain is Acyl-CoA desaturase 3 from Mus musculus (Mouse).